Reading from the N-terminus, the 283-residue chain is 4-diphosphocytidyl-2-C-methyl-D-erythritol kinase (283 aa).

Lys-10 is a catalytic residue. Position 99 to 109 (99 to 109 (PMGGGLGGGSS)) interacts with ATP. Asp-141 is a catalytic residue.

This sequence belongs to the GHMP kinase family. IspE subfamily. Homodimer.

The enzyme catalyses 4-CDP-2-C-methyl-D-erythritol + ATP = 4-CDP-2-C-methyl-D-erythritol 2-phosphate + ADP + H(+). It participates in isoprenoid biosynthesis; isopentenyl diphosphate biosynthesis via DXP pathway; isopentenyl diphosphate from 1-deoxy-D-xylulose 5-phosphate: step 3/6. Functionally, catalyzes the phosphorylation of the position 2 hydroxy group of 4-diphosphocytidyl-2C-methyl-D-erythritol. The polypeptide is 4-diphosphocytidyl-2-C-methyl-D-erythritol kinase (Salmonella arizonae (strain ATCC BAA-731 / CDC346-86 / RSK2980)).